The primary structure comprises 311 residues: Mediator of RNA polymerase II transcription subunit 27 (311 aa).

Ser132 is modified (phosphoserine). N6-methyllysine is present on Lys134.

The protein belongs to the Mediator complex subunit 27 family. As to quaternary structure, component of the Mediator complex, which is composed of MED1, MED4, MED6, MED7, MED8, MED9, MED10, MED11, MED12, MED13, MED13L, MED14, MED15, MED16, MED17, MED18, MED19, MED20, MED21, MED22, MED23, MED24, MED25, MED26, MED27, MED29, MED30, MED31, CCNC, CDK8 and CDC2L6/CDK11. The MED12, MED13, CCNC and CDK8 subunits form a distinct module termed the CDK8 module. Mediator containing the CDK8 module is less active than Mediator lacking this module in supporting transcriptional activation. Individual preparations of the Mediator complex lacking one or more distinct subunits have been variously termed ARC, CRSP, DRIP, PC2, SMCC and TRAP.

Its subcellular location is the nucleus. In terms of biological role, component of the Mediator complex, a coactivator involved in the regulated transcription of nearly all RNA polymerase II-dependent genes. Mediator functions as a bridge to convey information from gene-specific regulatory proteins to the basal RNA polymerase II transcription machinery. Mediator is recruited to promoters by direct interactions with regulatory proteins and serves as a scaffold for the assembly of a functional preinitiation complex with RNA polymerase II and the general transcription factors. The protein is Mediator of RNA polymerase II transcription subunit 27 (MED27) of Bos taurus (Bovine).